A 660-amino-acid chain; its full sequence is Translation factor GUF1, mitochondrial (660 aa).

The transit peptide at Met1–Tyr42 directs the protein to the mitochondrion. One can recognise a tr-type G domain in the interval Glu62–Val242. Residues Ala71–Ser78, Asp135–His139, and Asn189–Asp192 contribute to the GTP site.

The protein belongs to the TRAFAC class translation factor GTPase superfamily. Classic translation factor GTPase family. LepA subfamily.

It is found in the mitochondrion inner membrane. It catalyses the reaction GTP + H2O = GDP + phosphate + H(+). Its function is as follows. Promotes mitochondrial protein synthesis. May act as a fidelity factor of the translation reaction, by catalyzing a one-codon backward translocation of tRNAs on improperly translocated ribosomes. Binds to mitochondrial ribosomes in a GTP-dependent manner. In Phaeosphaeria nodorum (strain SN15 / ATCC MYA-4574 / FGSC 10173) (Glume blotch fungus), this protein is Translation factor GUF1, mitochondrial.